The primary structure comprises 396 residues: Gap junction gamma-1 protein (396 aa).

The Cytoplasmic segment spans residues 1–22 (MSWSFLTRLLEEIHNHSTFVGK). A helical membrane pass occupies residues 23 to 45 (IWLTVLIVFRIVLTAVGGESIYY). At 46–75 (DEQSKFVCNTEQPGCENVCYDAFAPLSHVR) the chain is on the extracellular side. A helical transmembrane segment spans residues 76–95 (FWVFQIILVATPSVMYLGYA). Residues 96-175 (IHKIAKMEHG…RRIREDGLMK (80 aa)) are Cytoplasmic-facing. The tract at residues 145 to 165 (ELESDKENKEQSQPKPKHDGR) is disordered. Positions 147 to 156 (ESDKENKEQS) are enriched in basic and acidic residues. The helical transmembrane segment at 176-198 (IYVLQLLARTVFEVGFLIGQYFL) threads the bilayer. The Extracellular portion of the chain corresponds to 199–228 (YGFQVHPFYVCSRLPCPHKIDCFISRPTEK). A helical transmembrane segment spans residues 229 to 248 (TIFLLIMYGVTGLCLLLNIW). Residues 249–396 (EMLHLGFGTI…SGDGKTSVWI (148 aa)) are Cytoplasmic-facing. The segment at 353–396 (VQAYSHQNNPHGPREKKAKVGSKAGSNKSTASSKSGDGKTSVWI) is disordered. Polar residues predominate over residues 376–387 (AGSNKSTASSKS).

The protein belongs to the connexin family. Gamma-type subfamily. A connexon is composed of a hexamer of connexins. Interacts with CNST.

It localises to the cell membrane. The protein localises to the cell junction. Its subcellular location is the gap junction. One gap junction consists of a cluster of closely packed pairs of transmembrane channels, the connexons, through which materials of low MW diffuse from one cell to a neighboring cell. In Homo sapiens (Human), this protein is Gap junction gamma-1 protein (GJC1).